Here is a 97-residue protein sequence, read N- to C-terminus: NADH dehydrogenase [ubiquinone] 1 alpha subcomplex subunit 2 (97 aa).

A disulfide bond links Cys-19 and Cys-53.

The protein belongs to the complex I NDUFA2 subunit family. Complex I is composed of at least 49 different subunits.

Its subcellular location is the mitochondrion inner membrane. Its function is as follows. Accessory subunit of the mitochondrial membrane respiratory chain NADH dehydrogenase (Complex I), that is believed not to be involved in catalysis. Complex I functions in the transfer of electrons from NADH to the respiratory chain. The immediate electron acceptor for the enzyme is believed to be ubiquinone. This chain is NADH dehydrogenase [ubiquinone] 1 alpha subcomplex subunit 2, found in Arabidopsis thaliana (Mouse-ear cress).